Here is a 253-residue protein sequence, read N- to C-terminus: MSAVRFEGVTKRFGQTLALDEVSFTVEPGEVVVLLGLSGSGKSTLLRHVDGLHGASAGRVIALGTDVGQARGARLRELRRRISFVFQQFHLVDSLSVLENVCTGALGRLRGLRLGLVTYPRAVRLEALEHLERVGLASQAFQRADTLSGGQQQRVAVARALMQRPEILLADEPVASLDPESSAQVMGLIREIASERNLTVLCSLHQVELALSWADRIVGLRSGQVVLDKAAGDLDHQQAVAMIYRAGPLRAIA.

The ABC transporter domain maps to 4–247; the sequence is VRFEGVTKRF…QAVAMIYRAG (244 aa). 36-43 is an ATP binding site; that stretch reads GLSGSGKS.

It belongs to the ABC transporter superfamily. Phosphonates importer (TC 3.A.1.9.1) family. In terms of assembly, the complex is composed of two ATP-binding proteins (PhnC), two transmembrane proteins (PhnE) and a solute-binding protein (PhnD).

The protein resides in the cell membrane. The catalysed reaction is phosphonate(out) + ATP + H2O = phosphonate(in) + ADP + phosphate + H(+). Part of the ABC transporter complex PhnCDE involved in phosphonates import. Responsible for energy coupling to the transport system. In Frankia casuarinae (strain DSM 45818 / CECT 9043 / HFP020203 / CcI3), this protein is Phosphonates import ATP-binding protein PhnC.